We begin with the raw amino-acid sequence, 291 residues long: N-acetylmannosamine kinase (291 aa).

Residues 5–12 (AIDIGGTK) and 132–139 (GVGGGVVS) contribute to the ATP site. Zn(2+)-binding residues include His156, Cys166, Cys168, and Cys173.

It belongs to the ROK (NagC/XylR) family. NanK subfamily. As to quaternary structure, homodimer.

It carries out the reaction an N-acyl-D-mannosamine + ATP = an N-acyl-D-mannosamine 6-phosphate + ADP + H(+). Its pathway is amino-sugar metabolism; N-acetylneuraminate degradation; D-fructose 6-phosphate from N-acetylneuraminate: step 2/5. In terms of biological role, catalyzes the phosphorylation of N-acetylmannosamine (ManNAc) to ManNAc-6-P. This is N-acetylmannosamine kinase from Escherichia coli (strain ATCC 8739 / DSM 1576 / NBRC 3972 / NCIMB 8545 / WDCM 00012 / Crooks).